A 386-amino-acid polypeptide reads, in one-letter code: Succinate--CoA ligase [ADP-forming] subunit beta (386 aa).

Residues 9–244 (KALLRAAGIK…TTQEDHRETQ (236 aa)) enclose the ATP-grasp domain. ATP is bound by residues K46, 53 to 55 (GRG), E100, and R103. Residues N199 and D213 each contribute to the Mg(2+) site. Substrate is bound by residues N264 and 321–323 (GIV).

This sequence belongs to the succinate/malate CoA ligase beta subunit family. As to quaternary structure, heterotetramer of two alpha and two beta subunits. The cofactor is Mg(2+).

It catalyses the reaction succinate + ATP + CoA = succinyl-CoA + ADP + phosphate. The enzyme catalyses GTP + succinate + CoA = succinyl-CoA + GDP + phosphate. The protein operates within carbohydrate metabolism; tricarboxylic acid cycle; succinate from succinyl-CoA (ligase route): step 1/1. Functionally, succinyl-CoA synthetase functions in the citric acid cycle (TCA), coupling the hydrolysis of succinyl-CoA to the synthesis of either ATP or GTP and thus represents the only step of substrate-level phosphorylation in the TCA. The beta subunit provides nucleotide specificity of the enzyme and binds the substrate succinate, while the binding sites for coenzyme A and phosphate are found in the alpha subunit. In Dichelobacter nodosus (strain VCS1703A), this protein is Succinate--CoA ligase [ADP-forming] subunit beta.